A 104-amino-acid polypeptide reads, in one-letter code: ATP-dependent Clp protease adapter protein ClpS (104 aa).

This sequence belongs to the ClpS family. Binds to the N-terminal domain of the chaperone ClpA.

Its function is as follows. Involved in the modulation of the specificity of the ClpAP-mediated ATP-dependent protein degradation. This chain is ATP-dependent Clp protease adapter protein ClpS, found in Burkholderia ambifaria (strain MC40-6).